A 274-amino-acid chain; its full sequence is 1D-myo-inositol 2-acetamido-2-deoxy-alpha-D-glucopyranoside deacetylase 2 (274 aa).

3 residues coordinate Zn(2+): H6, D9, and H140.

It belongs to the MshB deacetylase family. It depends on Zn(2+) as a cofactor.

It catalyses the reaction 1D-myo-inositol 2-acetamido-2-deoxy-alpha-D-glucopyranoside + H2O = 1D-myo-inositol 2-amino-2-deoxy-alpha-D-glucopyranoside + acetate. In terms of biological role, catalyzes the deacetylation of 1D-myo-inositol 2-acetamido-2-deoxy-alpha-D-glucopyranoside (GlcNAc-Ins) in the mycothiol biosynthesis pathway. This is 1D-myo-inositol 2-acetamido-2-deoxy-alpha-D-glucopyranoside deacetylase 2 from Saccharopolyspora erythraea (strain ATCC 11635 / DSM 40517 / JCM 4748 / NBRC 13426 / NCIMB 8594 / NRRL 2338).